The chain runs to 214 residues: Probable transaldolase (214 aa).

The active-site Schiff-base intermediate with substrate is the lysine 83.

The protein belongs to the transaldolase family. Type 3B subfamily.

It is found in the cytoplasm. It carries out the reaction D-sedoheptulose 7-phosphate + D-glyceraldehyde 3-phosphate = D-erythrose 4-phosphate + beta-D-fructose 6-phosphate. It functions in the pathway carbohydrate degradation; pentose phosphate pathway; D-glyceraldehyde 3-phosphate and beta-D-fructose 6-phosphate from D-ribose 5-phosphate and D-xylulose 5-phosphate (non-oxidative stage): step 2/3. Its function is as follows. Transaldolase is important for the balance of metabolites in the pentose-phosphate pathway. This Geobacter sulfurreducens (strain ATCC 51573 / DSM 12127 / PCA) protein is Probable transaldolase.